Consider the following 468-residue polypeptide: H(+)/Cl(-) exchange transporter ClcA (468 aa).

At 1–30 (MSTRETFKISLLAKMPKDVINQFLSKDKTP) the chain is on the cytoplasmic side. A helical membrane pass occupies residues 31-67 (FSVLFLSLLVGILAGLVGTYFEQAVHLVSETRTDWLK). Residues 68–74 (SEIGSFL) lie on the Periplasmic side of the membrane. A helical transmembrane segment spans residues 75–98 (PLWLAAFLISAFLAFIGYFLVHRF). The Selectivity filter part_1 signature appears at 104–108 (GSGIP). Chloride is bound at residue Ser105. Residues 107-114 (IPEIEGAM) constitute an intramembrane region (helical). Topologically, residues 115–121 (DGMRPVR) are cytoplasmic. The next 2 membrane-spanning stretches (helical) occupy residues 122–139 (WWRVLPVKFFGGMGALGS) and 146–164 (EGPTVQMGGAVGRMISDIF). The Selectivity filter part_2 signature appears at 144 to 148 (GREGP). Over 165-174 (RVKNEDTRHS) the chain is Cytoplasmic. 2 intramembrane regions (helical) span residues 175-187 (LLAAGAAGGLAAA) and 191-199 (PLAGIMFVI). Residues 200 to 212 (EEMRPQFRYTLIS) lie on the Cytoplasmic side of the membrane. A helical transmembrane segment spans residues 213-230 (VRAVIISAVAANIVFRVI). At 231 to 250 (NGQDAVITMPQYDAPELSTL) the chain is on the periplasmic side. Residues 251 to 279 (GLFLLLGALFGVFGVLFNYLITLAQDLFV) form a helical membrane-spanning segment. Topologically, residues 280-285 (KFHRND) are cytoplasmic. The chain crosses the membrane as a helical span at residues 286 to 307 (RKRYLLTGSMIGGCFGLLLLYV). Residues 308–327 (PELTGGGISLIPTITNGGYG) are Periplasmic-facing. Transmembrane regions (helical) follow at residues 328–347 (AGILLLLFVGRIFTTLLCFG) and 353–374 (GIFAPMLALGTLFGYAFGLIAK). The Selectivity filter part_3 signature appears at 353-357 (GIFAP). 2 residues coordinate chloride: Ile354 and Phe355. At 375–384 (VWFPELNIEP) the chain is on the periplasmic side. Residues 385–399 (GMFAIAGMGALFAAT) constitute an intramembrane region (helical). The segment at residues 400-402 (VRA) is an intramembrane region (note=Loop between two helices). Positions 403 to 414 (PITGILLVIEMT) form an intramembrane region, helical. Positions 415–419 (NNYHL) form an intramembrane region, note=Loop between two helices. The chain crosses the membrane as a helical span at residues 420 to 436 (ILPLIITSLGAVIFAQL). Topologically, residues 437–468 (LGGQPIYSQLLHRTLKNQKLQQQDLPPQSPNS) are cytoplasmic. Chloride is bound at residue Tyr443.

This sequence belongs to the chloride channel (TC 2.A.49) family. ClcA subfamily. Homodimer.

The protein localises to the cell inner membrane. It carries out the reaction 2 chloride(in) + H(+)(out) = 2 chloride(out) + H(+)(in). Functionally, proton-coupled chloride transporter. Functions as antiport system and exchanges two chloride ions for 1 proton. Probably acts as an electrical shunt for an outwardly-directed proton pump that is linked to amino acid decarboxylation, as part of the extreme acid resistance (XAR) response. The chain is H(+)/Cl(-) exchange transporter ClcA from Vibrio cholerae serotype O1 (strain ATCC 39541 / Classical Ogawa 395 / O395).